A 328-amino-acid polypeptide reads, in one-letter code: Malate dehydrogenase (328 aa).

G12–G18 serves as a coordination point for NAD(+). 2 residues coordinate substrate: R95 and R101. Residues N108, Q115, and V132 to N134 each bind NAD(+). The substrate site is built by N134 and R165. Residue H190 is the Proton acceptor of the active site.

Belongs to the LDH/MDH superfamily. MDH type 2 family.

The enzyme catalyses (S)-malate + NAD(+) = oxaloacetate + NADH + H(+). Functionally, catalyzes the reversible oxidation of malate to oxaloacetate. In Variovorax paradoxus (strain S110), this protein is Malate dehydrogenase.